Reading from the N-terminus, the 256-residue chain is Probable serine/threonine-protein kinase YbdM (256 aa).

The Protein kinase domain occupies 25-256 (YKIEECLGMG…DLNRAIQSVT (232 aa)). ATP-binding positions include 31-39 (LGMGGYGLV) and Lys54. Asp149 functions as the Proton acceptor in the catalytic mechanism.

This sequence belongs to the protein kinase superfamily. Ser/Thr protein kinase family.

The enzyme catalyses L-seryl-[protein] + ATP = O-phospho-L-seryl-[protein] + ADP + H(+). The catalysed reaction is L-threonyl-[protein] + ATP = O-phospho-L-threonyl-[protein] + ADP + H(+). This Bacillus subtilis (strain 168) protein is Probable serine/threonine-protein kinase YbdM (ybdM).